A 289-amino-acid chain; its full sequence is Phycobilisome 39 kDa linker polypeptide, phycocyanin-associated, rod (289 aa).

The 179-residue stretch at 2–180 folds into the PBS-linker domain; the sequence is PITSAASRLG…LYRGYANSDR (179 aa). The segment at 213 to 233 is disordered; that stretch reads SYLPSKQGTAPSRTFGRSSQG. Residues 216-233 show a composition bias toward polar residues; sequence PSKQGTAPSRTFGRSSQG. The CpcD-like domain maps to 236-288; sequence PRLYRIEVTGISLPRYPKVRRSNKEFIVPYEQLSSTLQQINKLGGKVASITFA.

Belongs to the phycobilisome linker protein family.

It localises to the cellular thylakoid membrane. Rod linker protein, associated with phycocyanin. Linker polypeptides determine the state of aggregation and the location of the disk-shaped phycobiliprotein units within the phycobilisome and modulate their spectroscopic properties in order to mediate a directed and optimal energy transfer. This is Phycobilisome 39 kDa linker polypeptide, phycocyanin-associated, rod (cpcI2) from Microchaete diplosiphon (Fremyella diplosiphon).